Here is a 526-residue protein sequence, read N- to C-terminus: MPISLGQAFARNFLGNAPQWYKAAILLFLLINPIAFYLDPFIAGWLLVVEFIFTLAMALKCYPLQPGGLLAIEAVLIGMTSAKQVKHELVANIEVLLLLVFMVAGIYFMKQLLLYVFTKLLIRIHSKTLLSLAFCLVSAFLSAFLDALTVIAVVISVATGFYAIYHKVSSGKEFGNPHDHTDDDAVNELNRQHLDDFRAFLRSLMMHAAIGTALGGVCTLVGEPQNLIIGEQAGWNFGEFAIRMSPVTVPVFICGLLTCVLVEKCRWFGYGAKLPDAVRRIMEDYNRYEEAGRTAQDKAKLIVQAAIALWLILGLAMHLAAVGLIGLSVIVLATSLTGITEEHSLGKAFQEALPFTALLAVFFSVVAVIIDQQLFKPVIQWVLAAEPDAQLALFYLANGLLSMVSDNVFVGTVYINEVKTALLNNAISREQFELLAVAINTGTNLPSVATPNGQAAFLFMLTSALAPLLRLSYGRMVWMALPYTLVLGLVGFFSVEMLLGPLTDWFYQAGWLVLDNVAPAALPVLH.

The next 12 helical transmembrane spans lie at 25 to 45 (ILLF…IAGW), 52 to 72 (IFTL…LLAI), 89 to 109 (LVAN…IYFM), 130 to 164 (LSLA…FYAI), 204 to 224 (LMMH…VGEP), 242 to 262 (IRMS…CVLV), 307 to 327 (IALW…LIGL), 350 to 370 (QEAL…AVII), 391 to 411 (LALF…VFVG), 448 to 468 (VATP…LAPL), 479 to 499 (MALP…EMLL), and 505 to 525 (WFYQ…LPVL).

The protein belongs to the NhaB Na(+)/H(+) (TC 2.A.34) antiporter family.

The protein resides in the cell inner membrane. It catalyses the reaction 2 Na(+)(in) + 3 H(+)(out) = 2 Na(+)(out) + 3 H(+)(in). Functionally, na(+)/H(+) antiporter that extrudes sodium in exchange for external protons. The chain is Na(+)/H(+) antiporter NhaB from Aeromonas hydrophila subsp. hydrophila (strain ATCC 7966 / DSM 30187 / BCRC 13018 / CCUG 14551 / JCM 1027 / KCTC 2358 / NCIMB 9240 / NCTC 8049).